Reading from the N-terminus, the 344-residue chain is Transmembrane protein 268 (344 aa).

The disordered stretch occupies residues 1-31 (MACEPQMDPGGAAGPLPTSSPGWSPLPGGSP). The segment covering 14–27 (GPLPTSSPGWSPLP) has biased composition (low complexity). Helical transmembrane passes span 106 to 126 (AFAV…SQMF) and 133 to 153 (AGVL…VVIF). The tract at residues 244–266 (TANEGPENLLEETPLLPDRPGST) is disordered. The segment covering 247–259 (EGPENLLEETPLL) has biased composition (low complexity).

Interacts with ITGAM; this interaction inhibits ITGAM degradation via the endosome-lysosome pathway. Interacts with ITGB4; this interaction prevents ITGB4 degradation.

The protein resides in the cell membrane. Functionally, stabilizes cell surface expression of ITGAM and participates in the adhesion and migration of phagocytes during bacterial clearance. The chain is Transmembrane protein 268 (TMEM268) from Bos taurus (Bovine).